We begin with the raw amino-acid sequence, 592 residues long: Bifunctional purine biosynthesis protein ATIC (592 aa).

Met-1 is modified (N-acetylmethionine). One can recognise an MGS-like domain in the interval Ala-2–Cys-146. Residues Ala-2 to Ser-198 form an IMP cyclohydrolase region. IMP-binding positions include Ser-12 to Lys-14, Ser-34 to Thr-37, Arg-64 to Thr-67, Cys-101 to Asn-102, and Asp-125 to Ile-126. The active-site Proton donor/acceptor; for FAICAR cyclization activity is the Lys-137. An N6-acetyllysine modification is found at Lys-199. Residues Lys-199–His-592 are AICAR formyltransferase. 5-amino-1-(5-phospho-beta-D-ribosyl)imidazole-4-carboxamide contacts are provided by residues Arg-207–Tyr-208, His-267, Gly-316, Asp-339, Asn-431, and Arg-451. The Proton acceptor; for AICAR formyltransferase activity role is filled by His-267. Residue Ile-452 participates in (6R)-10-formyltetrahydrofolate binding. Phe-541 is a binding site for 5-amino-1-(5-phospho-beta-D-ribosyl)imidazole-4-carboxamide. (6R)-10-formyltetrahydrofolate contacts are provided by residues Asp-546 and Ser-565–Ala-566. Arg-588 contributes to the 5-amino-1-(5-phospho-beta-D-ribosyl)imidazole-4-carboxamide binding site.

This sequence belongs to the PurH family. In terms of assembly, homodimer. Associates with internalized INSR complexes on Golgi/endosomal membranes. Interacts with INSR; ATIC together with PRKAA2/AMPK2 and HACD3/PTPLAD1 is proposed to be part of a signaling network regulating INSR autophosphorylation and endocytosis. In terms of tissue distribution, present in the heart, brain, placenta, lung, liver, skeletal muscle, kidney, pancreas.

Its subcellular location is the cytoplasm. The protein resides in the cytosol. It catalyses the reaction (6R)-10-formyltetrahydrofolate + 5-amino-1-(5-phospho-beta-D-ribosyl)imidazole-4-carboxamide = 5-formamido-1-(5-phospho-D-ribosyl)imidazole-4-carboxamide + (6S)-5,6,7,8-tetrahydrofolate. The enzyme catalyses 10-formyldihydrofolate + 5-amino-1-(5-phospho-beta-D-ribosyl)imidazole-4-carboxamide = 5-formamido-1-(5-phospho-D-ribosyl)imidazole-4-carboxamide + 7,8-dihydrofolate. It carries out the reaction IMP + H2O = 5-formamido-1-(5-phospho-D-ribosyl)imidazole-4-carboxamide. The catalysed reaction is 5-amino-1-(5-phospho-D-ribosyl)imidazole-4-thiocarboxamide + 10-formyldihydrofolate = 6-thio-IMP + 7,8-dihydrofolate + H2O. The protein operates within purine metabolism; IMP biosynthesis via de novo pathway; 5-formamido-1-(5-phospho-D-ribosyl)imidazole-4-carboxamide from 5-amino-1-(5-phospho-D-ribosyl)imidazole-4-carboxamide (10-formyl THF route): step 1/1. It functions in the pathway purine metabolism; IMP biosynthesis via de novo pathway; IMP from 5-formamido-1-(5-phospho-D-ribosyl)imidazole-4-carboxamide: step 1/1. AMP and XMP inhibit AICAR formyltransferase activity. AICAR formyltransferase activity is inhibited by N-(6-fluoro-1-oxo-1,2-dihydroisoquinolin-7-yl)-5- [(3R)-3-hydroxypyrrolidin-1-yl]thiophene-2-sulfonamide (LSN 3213128), which acts as a tumor suppression in cancer cell lines. Functionally, bifunctional enzyme that catalyzes the last two steps of purine biosynthesis. Acts as a transformylase that incorporates a formyl group to the AMP analog AICAR (5-amino-1-(5-phospho-beta-D-ribosyl)imidazole-4-carboxamide) to produce the intermediate formyl-AICAR (FAICAR). Can use both 10-formyldihydrofolate and 10-formyltetrahydrofolate as the formyl donor in this reaction. Also catalyzes the cyclization of FAICAR to inosine monophosphate (IMP). Is able to convert thio-AICAR to 6-mercaptopurine ribonucleotide, an inhibitor of purine biosynthesis used in the treatment of human leukemias. Promotes insulin receptor/INSR autophosphorylation and is involved in INSR internalization. This chain is Bifunctional purine biosynthesis protein ATIC, found in Homo sapiens (Human).